The following is a 333-amino-acid chain: G-protein coupled receptor 146 (333 aa).

Residues 1 to 21 (MWSCEDLNYTNSGEEQYLCNE) are Extracellular-facing. N8 is a glycosylation site (N-linked (GlcNAc...) asparagine). The helical transmembrane segment at 22–42 (FHLFLFIFSVLYLIICFPVGL) threads the bilayer. Over 43–65 (CYNVQLVLVNLYNKATMTMPDVY) the chain is Cytoplasmic. A helical transmembrane segment spans residues 66 to 86 (FVNMAIAGLIINAVAPVYLFG). At 87-102 (PAYTKWSLWSFGNEVY) the chain is on the extracellular side. The helical transmembrane segment at 103–123 (ITLLILFNVSSLVIMYSTTLL) threads the bilayer. Residues 124 to 146 (SLDYYIECALPRTYMSSVYNTKH) lie on the Cytoplasmic side of the membrane. The helical transmembrane segment at 147–167 (VCGFIWGGAVLTSFSSLLFYI) threads the bilayer. The Extracellular portion of the chain corresponds to 168–189 (CNHVSTKIIECSKMQNREAADA). Residues 190-210 (IMVLIGYVVPIIAVIYALVLI) traverse the membrane as a helical segment. Residues 211 to 234 (LQIRKEATPLDQESGRLDPSVHRL) lie on the Cytoplasmic side of the membrane. A helical membrane pass occupies residues 235–255 (LIATVCTQFILWTPYYVTLLV). Over 256 to 275 (NTFMDARVKSSNTFYIRIFQ) the chain is Extracellular. The chain crosses the membrane as a helical span at residues 276-296 (FTEGLSNFLAFSSSFVLPLIH). Topologically, residues 297-333 (RHINKNFSGKLQRLLKRLHCGSQGCTHEHTVVQQVMT) are cytoplasmic.

This sequence belongs to the G-protein coupled receptor 1 family.

The protein resides in the cell membrane. Functionally, G-protein coupled receptor required for the regulation of plasma cholesterol levels. The chain is G-protein coupled receptor 146 (gpr146) from Xenopus laevis (African clawed frog).